The primary structure comprises 919 residues: TRPM8 channel-associated factor 2 (919 aa).

The Peptidase M60 domain maps to 542–841 (DCWVSTGLYL…TYLQLQEAFG (300 aa)).

It belongs to the TCAF family. In terms of assembly, isoform 2 interacts with TRPM8 (via N-terminus and C-terminus domains); the interaction inhibits TRPM8 channel activity. Interacts with TRPV6. Isoform 2 is expressed in the prostate and in cancerous prostate samples.

Its subcellular location is the cell membrane. In terms of biological role, negatively regulates the plasma membrane cation channel TRPM8 activity. Involved in the recruitment of TRPM8 to the cell surface. Promotes prostate cancer cell migration stimulation in a TRPM8-dependent manner. In Homo sapiens (Human), this protein is TRPM8 channel-associated factor 2.